The primary structure comprises 500 residues: Probable betaine aldehyde dehydrogenase (500 aa).

249–254 (GSLATG) serves as a coordination point for NAD(+). Catalysis depends on glutamate 271, which acts as the Proton acceptor. Residue cysteine 305 is the Nucleophile of the active site.

The protein belongs to the aldehyde dehydrogenase family.

The enzyme catalyses betaine aldehyde + NAD(+) + H2O = glycine betaine + NADH + 2 H(+). The protein operates within amine and polyamine biosynthesis; betaine biosynthesis via choline pathway; betaine from betaine aldehyde: step 1/1. This chain is Probable betaine aldehyde dehydrogenase (meu8), found in Schizosaccharomyces pombe (strain 972 / ATCC 24843) (Fission yeast).